A 438-amino-acid chain; its full sequence is Fumarate hydratase class II (438 aa).

Residues 76–78 (SGT), 101–104 (HPND), 111–113 (SSN), and Thr-159 contribute to the substrate site. His-160 (proton donor/acceptor) is an active-site residue. The active site involves Ser-291. Substrate is bound by residues Ser-292 and 297–299 (KTN).

The protein belongs to the class-II fumarase/aspartase family. Fumarase subfamily. As to quaternary structure, homotetramer.

It localises to the cytoplasm. It catalyses the reaction (S)-malate = fumarate + H2O. The protein operates within carbohydrate metabolism; tricarboxylic acid cycle; (S)-malate from fumarate: step 1/1. Its function is as follows. Involved in the TCA cycle. Catalyzes the stereospecific interconversion of fumarate to L-malate. This Saccharolobus solfataricus (strain ATCC 35092 / DSM 1617 / JCM 11322 / P2) (Sulfolobus solfataricus) protein is Fumarate hydratase class II.